Consider the following 393-residue polypeptide: tRNA-specific 2-thiouridylase MnmA (393 aa).

Residues 19 to 26 and L45 each bind ATP; that span reads AMSGGVDS. C113 (nucleophile) is an active-site residue. An intrachain disulfide couples C113 to C210. An ATP-binding site is contributed by G137. Residues 160 to 162 are interaction with tRNA; sequence RDQ. The Cysteine persulfide intermediate role is filled by C210.

Belongs to the MnmA/TRMU family.

It localises to the cytoplasm. It carries out the reaction S-sulfanyl-L-cysteinyl-[protein] + uridine(34) in tRNA + AH2 + ATP = 2-thiouridine(34) in tRNA + L-cysteinyl-[protein] + A + AMP + diphosphate + H(+). Its function is as follows. Catalyzes the 2-thiolation of uridine at the wobble position (U34) of tRNA, leading to the formation of s(2)U34. The sequence is that of tRNA-specific 2-thiouridylase MnmA from Bradyrhizobium diazoefficiens (strain JCM 10833 / BCRC 13528 / IAM 13628 / NBRC 14792 / USDA 110).